The following is a 154-amino-acid chain: Iron-sulfur cluster assembly 2 homolog, mitochondrial (154 aa).

The N-terminal 8 residues, 1-8 (MAAAWGSS), are a transit peptide targeting the mitochondrion. The disordered stretch occupies residues 29–49 (SLGPQARREASSSSPEAGEGQ). The segment covering 39 to 49 (SSSSPEAGEGQ) has biased composition (low complexity). 3 residues coordinate Fe cation: Cys79, Cys144, and Cys146.

It belongs to the HesB/IscA family. In terms of assembly, heterotetramer; forms a dimer of dimers with IBA57. Interacts with [2Fe-2S]-ISCA2 forming the heterodimer [2Fe- 2S]-ISCA2-IBA57 complex; [2Fe-2S] cluster binding is absolutely required to promote the complex formation.

It localises to the mitochondrion. Its function is as follows. Involved in the maturation of mitochondrial 4Fe-4S proteins functioning late in the iron-sulfur cluster assembly pathway. May be involved in the binding of an intermediate of Fe/S cluster assembly. This Homo sapiens (Human) protein is Iron-sulfur cluster assembly 2 homolog, mitochondrial (ISCA2).